We begin with the raw amino-acid sequence, 250 residues long: Replicating protein (250 aa).

2 disordered regions span residues 1-23 (MFQQ…PCEK) and 168-250 (KAHM…KAFE). Basic and acidic residues-rich tracts occupy residues 13–23 (GTDEPAHPCEK) and 178–190 (DRLR…RTRA). Over residues 218–237 (SRCSFTTPNRPRRTLPSSHP) the composition is skewed to polar residues.

Required for replication. It likely regulates pTAR copy number. The chain is Replicating protein (repA) from Rhizobium radiobacter (Agrobacterium tumefaciens).